The chain runs to 704 residues: Preterpestacin I synthase tpcA (704 aa).

A terpene cyclase region spans residues 1–329 (MEQLSYQSKL…CSACPRQNAW (329 aa)). Residue aspartate 96 participates in Mg(2+) binding. Substrate is bound by residues aspartate 96, asparagine 231, 235–239 (SWERE), and 325–326 (RQ). The DDXXD 1 motif lies at 96–100 (DDGGE). An NSE/DTE motif is present at residues 231–239 (NDYFSWERE). A prenyltransferase region spans residues 330–688 (KDMSSQSLNG…MLRLCLAKLS (359 aa)). The tract at residues 361-380 (KDSSFFGSQPSDDEPSLSEV) is disordered. Lysine 406, arginine 409, and histidine 438 together coordinate isopentenyl diphosphate. 2 residues coordinate Mg(2+): aspartate 445 and aspartate 449. A DDXXD 2 motif is present at residues 445-449 (DDLED). Arginine 454 provides a ligand contact to dimethylallyl diphosphate. Residue arginine 455 participates in isopentenyl diphosphate binding. Dimethylallyl diphosphate is bound by residues lysine 532, threonine 533, glutamine 568, asparagine 575, lysine 583, and lysine 593.

In the N-terminal section; belongs to the terpene synthase family. This sequence in the C-terminal section; belongs to the FPP/GGPP synthase family. In terms of assembly, hexamer. The cofactor is Mg(2+).

It catalyses the reaction isopentenyl diphosphate + (2E,6E)-farnesyl diphosphate = (2E,6E,10E)-geranylgeranyl diphosphate + diphosphate. The enzyme catalyses isopentenyl diphosphate + (2E,6E,10E)-geranylgeranyl diphosphate = (2E,6E,10E,14E)-geranylfarnesyl diphosphate + diphosphate. Its pathway is secondary metabolite biosynthesis; terpenoid biosynthesis. In terms of biological role, bifunctional terpene synthase; part of the gene cluster that mediates the biosynthesis of terpestacin. The bifunctional terpene synthase tpcA converts isopentenyl diphosphate (IPP) and dimethylallyl diphosphate (DMAPP) into the sesterterpene preterpestacin I. The C-terminal prenyltransferase (PT) domain of tpcA catalyzes formation of GFPP, whereas the N-terminal terpene cyclase (TC) domain catalyzes the cyclization of GFPP into preterpestacin I. The cytochrome P450 monooxygenase tpcB then hydroxylates preterpestacin I to yield 24-hydroxypreterpstacin I (renamed as preterpestacin II) whereas the cytochrome P450 monooxygenase tpcC further hydroxylates preterpestacin II to yield 16,17-dihydroxypreterpestacin II (renamed as preterpestacin III). Finally, the FAD-dependent monooxygenase tpcD converts preterpestacin III into terpestacin. In Cochliobolus heterostrophus (strain C5 / ATCC 48332 / race O) (Southern corn leaf blight fungus), this protein is Preterpestacin I synthase tpcA.